The primary structure comprises 179 residues: ADP-ribosylation factor 1-like 1 (179 aa).

Residue Gly2 is the site of N-myristoyl glycine attachment. The important for the stable binding to the membranes stretch occupies residues 3-16 (LFFSKISSFMFPNI). Residues 24 to 32 (GLDGAGKTT), 126 to 129 (NKQD), and Ala160 contribute to the GTP site.

It belongs to the small GTPase superfamily. Arf family.

It is found in the golgi apparatus membrane. It catalyses the reaction GTP + H2O = GDP + phosphate + H(+). With respect to regulation, alternates between an inactive GDP-bound form and an active GTP-bound form. Activated by a guanine nucleotide-exchange factor (GEF) and inactivated by GTPase-activating protein (GAP). In terms of biological role, small GTPase involved in protein trafficking between different compartments. Modulates vesicle budding and uncoating within the Golgi complex. In its GTP-bound form, triggers the recruitment of coatomer proteins to the Golgi membrane. The hydrolysis of ARF1-bound GTP, which is mediated by ARFGAPs proteins, is required for dissociation of coat proteins from Golgi membranes and vesicles. In Caenorhabditis elegans, this protein is ADP-ribosylation factor 1-like 1 (arf-1.1).